Reading from the N-terminus, the 259-residue chain is Thiazole synthase (259 aa).

The active-site Schiff-base intermediate with DXP is the Lys95. Residues Gly156, 183-184, and 205-206 contribute to the 1-deoxy-D-xylulose 5-phosphate site; these read AG and NS.

It belongs to the ThiG family. In terms of assembly, homotetramer. Forms heterodimers with either ThiH or ThiS.

Its subcellular location is the cytoplasm. It catalyses the reaction [ThiS sulfur-carrier protein]-C-terminal-Gly-aminoethanethioate + 2-iminoacetate + 1-deoxy-D-xylulose 5-phosphate = [ThiS sulfur-carrier protein]-C-terminal Gly-Gly + 2-[(2R,5Z)-2-carboxy-4-methylthiazol-5(2H)-ylidene]ethyl phosphate + 2 H2O + H(+). It participates in cofactor biosynthesis; thiamine diphosphate biosynthesis. Functionally, catalyzes the rearrangement of 1-deoxy-D-xylulose 5-phosphate (DXP) to produce the thiazole phosphate moiety of thiamine. Sulfur is provided by the thiocarboxylate moiety of the carrier protein ThiS. In vitro, sulfur can be provided by H(2)S. The protein is Thiazole synthase of Coxiella burnetii (strain RSA 331 / Henzerling II).